Consider the following 344-residue polypeptide: Ion-translocating oxidoreductase complex subunit D (344 aa).

4 consecutive transmembrane segments (helical) span residues 23-43, 44-64, 77-99, and 120-140; these read LVLGACVPGLLTLTWLYGPGT, LLNLAWASLVALACEAAMLAL, SALVTALLLAVALPPYAPWWLTL, and PFNPAMLGYVVALVSFPLEMT. Thr172 carries the FMN phosphoryl threonine modification. 5 helical membrane-spanning segments follow: residues 198–218, 222–242, 252–272, 285–305, and 306–326; these read LGSAGSEWVNLAFLLGGLFLL, LFTWHAPLGMLAGLFAMSLLF, GSPLFHLFSGATMLGAFFIVT, LVFGLGVGVLTYVIRAWGGYP, and DGVAFAVLLMNLAAPTIDYYT.

Belongs to the NqrB/RnfD family. The complex is composed of six subunits: RnfA, RnfB, RnfC, RnfD, RnfE and RnfG. It depends on FMN as a cofactor.

It localises to the cell inner membrane. Part of a membrane-bound complex that couples electron transfer with translocation of ions across the membrane. This chain is Ion-translocating oxidoreductase complex subunit D, found in Pseudomonas aeruginosa (strain UCBPP-PA14).